Consider the following 643-residue polypeptide: Manganese lipoxygenase (643 aa).

The 478-residue stretch at 166–643 (WYTDEVFAQQ…PEQLANAIVI (478 aa)) folds into the Lipoxygenase domain. Residues H325, H330, H510, N514, and I643 each coordinate Mn(2+).

It belongs to the lipoxygenase family. Mn(2+) is required as a cofactor.

The catalysed reaction is (9Z,12Z)-octadecadienoate + O2 = (13S)-hydroperoxy-(9Z,11E)-octadecadienoate. Its function is as follows. Lipoxygenase that metabolizes linoleic and alpha-linolenic acids to 13S-hydroperoxy fatty acids. The polypeptide is Manganese lipoxygenase (Pleurotus sapidus (Oyster mushroom)).